The sequence spans 236 residues: 2,3,4,5-tetrahydropyridine-2,6-dicarboxylate N-acetyltransferase (236 aa).

This sequence belongs to the transferase hexapeptide repeat family. DapH subfamily.

It catalyses the reaction (S)-2,3,4,5-tetrahydrodipicolinate + acetyl-CoA + H2O = L-2-acetamido-6-oxoheptanedioate + CoA. Its pathway is amino-acid biosynthesis; L-lysine biosynthesis via DAP pathway; LL-2,6-diaminopimelate from (S)-tetrahydrodipicolinate (acetylase route): step 1/3. In terms of biological role, catalyzes the transfer of an acetyl group from acetyl-CoA to tetrahydrodipicolinate. This is 2,3,4,5-tetrahydropyridine-2,6-dicarboxylate N-acetyltransferase from Bacillus pumilus (strain SAFR-032).